We begin with the raw amino-acid sequence, 381 residues long: Chaperone protein DnaJ (381 aa).

Residues 5–70 form the J domain; sequence DFYEVLGVSR…QKKAAYDQYG (66 aa). The CR-type zinc-finger motif lies at 136-214; sequence GVSKEIEVPT…CHGQGRKQKT (79 aa). Residues Cys-149, Cys-152, Cys-166, Cys-169, Cys-188, Cys-191, Cys-202, and Cys-205 each coordinate Zn(2+). CXXCXGXG motif repeat units lie at residues 149 to 156, 166 to 173, 188 to 195, and 202 to 209; these read CDICDGSG, CGTCHGHG, CPTCNGKG, and CNSCHGQG.

This sequence belongs to the DnaJ family. Homodimer. Zn(2+) is required as a cofactor.

It localises to the cytoplasm. Its function is as follows. Participates actively in the response to hyperosmotic and heat shock by preventing the aggregation of stress-denatured proteins and by disaggregating proteins, also in an autonomous, DnaK-independent fashion. Unfolded proteins bind initially to DnaJ; upon interaction with the DnaJ-bound protein, DnaK hydrolyzes its bound ATP, resulting in the formation of a stable complex. GrpE releases ADP from DnaK; ATP binding to DnaK triggers the release of the substrate protein, thus completing the reaction cycle. Several rounds of ATP-dependent interactions between DnaJ, DnaK and GrpE are required for fully efficient folding. Also involved, together with DnaK and GrpE, in the DNA replication of plasmids through activation of initiation proteins. In Vibrio atlanticus (strain LGP32) (Vibrio splendidus (strain Mel32)), this protein is Chaperone protein DnaJ.